A 173-amino-acid chain; its full sequence is Co-chaperone protein HscB (173 aa).

The region spanning 2-74 is the J domain; the sequence is DYFTLFGLPA…LKRAEYMLSQ (73 aa).

This sequence belongs to the HscB family. As to quaternary structure, interacts with HscA and stimulates its ATPase activity. Interacts with IscU.

Co-chaperone involved in the maturation of iron-sulfur cluster-containing proteins. Seems to help targeting proteins to be folded toward HscA. This chain is Co-chaperone protein HscB, found in Xenorhabdus nematophila (strain ATCC 19061 / DSM 3370 / CCUG 14189 / LMG 1036 / NCIMB 9965 / AN6).